Reading from the N-terminus, the 178-residue chain is tRNA (cytidine(56)-2'-O)-methyltransferase (178 aa).

L88 lines the S-adenosyl-L-methionine pocket.

The protein belongs to the aTrm56 family. Homodimer.

The protein localises to the cytoplasm. It carries out the reaction cytidine(56) in tRNA + S-adenosyl-L-methionine = 2'-O-methylcytidine(56) in tRNA + S-adenosyl-L-homocysteine + H(+). Its function is as follows. Specifically catalyzes the AdoMet-dependent 2'-O-ribose methylation of cytidine at position 56 in tRNAs. The chain is tRNA (cytidine(56)-2'-O)-methyltransferase from Methanopyrus kandleri (strain AV19 / DSM 6324 / JCM 9639 / NBRC 100938).